A 1026-amino-acid chain; its full sequence is Contactin-4 (1026 aa).

The first 18 residues, 1-18, serve as a signal peptide directing secretion; it reads MRLPWELLVLQSFMLCLA. Ig-like C2-type domains are found at residues 32-117, 122-206, 225-311, 316-400, 406-493, and 497-586; these read PSHV…AKLQ, ENFK…HQVL, PKIE…GQVT, PNWV…AELS, PDFS…GNVV, and PTKV…DKLS. 6 cysteine pairs are disulfide-bonded: Cys50/Cys100, Cys144/Cys194, Cys247/Cys295, Cys337/Cys384, Cys429/Cys477, and Cys519/Cys576. N-linked (GlcNAc...) asparagine glycosylation is found at Asn65, Asn90, and Asn191. Residues Asn370, Asn375, and Asn466 are each glycosylated (N-linked (GlcNAc...) asparagine). Fibronectin type-III domains are found at residues 599–697, 702–799, 804–899, and 900–995; these read PPEA…TEEA, TPAN…SAEE, PPAS…TRKP, and PPSQ…ISNS. Residues 685–710 are disordered; it reads PSRPSEKRRTEEALPEVTPANVSGGG. Residues 687–696 show a composition bias toward basic and acidic residues; it reads RPSEKRRTEE. Residues Asn705, Asn764, Asn858, Asn893, Asn911, Asn929, and Asn954 are each glycosylated (N-linked (GlcNAc...) asparagine). Ser1000 carries GPI-anchor amidated serine lipidation. Positions 1001 to 1026 are cleaved as a propeptide — removed in mature form; it reads GASTSNACTLSAISTIMISLTARSSL.

This sequence belongs to the immunoglobulin superfamily. Contactin family. As to quaternary structure, interacts with PTPRG. In terms of tissue distribution, specifically expressed in the nervous system. Not expressed in heart, spleen, lung, liver, kidney or skeletal muscle. In the hippocampus, it is highly expressed in CA1 pyramidal cells and weakly expressed in other regions of the hippocampus.

The protein resides in the cell membrane. It is found in the secreted. In terms of biological role, contactins mediate cell surface interactions during nervous system development. Has some neurite outgrowth-promoting activity. May be involved in synaptogenesis. The chain is Contactin-4 (Cntn4) from Rattus norvegicus (Rat).